Consider the following 155-residue polypeptide: Secreted RxLR effector protein RXLR-C301 (155 aa).

Residues 1 to 24 (MRLYALSVSLLAAITLLACVIASA) form the signal peptide. Positions 34–64 (RRLSQDVSETEITELSESKKPTAQDIDNEER) match the RxLR-dEER motif.

This sequence belongs to the RxLR effector family.

The protein resides in the secreted. Its subcellular location is the host cell membrane. Secreted effector that does not suppress pattern-triggered immunity (PTI) in plant host. This chain is Secreted RxLR effector protein RXLR-C301, found in Plasmopara halstedii (Downy mildew of sunflower).